Here is a 768-residue protein sequence, read N- to C-terminus: Ribonucleoside-diphosphate reductase large chain (768 aa).

ATP-binding positions include 7 to 8 (SK) and 13 to 19 (EKLGIDL). GDP contacts are provided by T196 and S211. A disulfide bond links C212 and C437. DTTP is bound by residues 220–222 (DSI), K237, and R250. Residue N420 participates in GDP binding. The active-site Proton acceptor is the N420. C422 acts as the Cysteine radical intermediate in catalysis. E424 is a binding site for GDP. E424 acts as the Proton acceptor in catalysis.

This sequence belongs to the ribonucleoside diphosphate reductase large chain family. As to quaternary structure, heterodimer of a large and a small subunit.

The catalysed reaction is a 2'-deoxyribonucleoside 5'-diphosphate + [thioredoxin]-disulfide + H2O = a ribonucleoside 5'-diphosphate + [thioredoxin]-dithiol. Its activity is regulated as follows. Under complex allosteric control mediated by deoxynucleoside triphosphates and ATP binding to separate specificity and activation sites on the large subunit. The type of nucleotide bound at the specificity site determines substrate preference. It seems probable that ATP makes the enzyme reduce CDP and UDP, dGTP favors ADP reduction and dTTP favors GDP reduction. Stimulated by ATP and inhibited by dATP binding to the activity site. In terms of biological role, provides the precursors necessary for DNA synthesis. Catalyzes the biosynthesis of deoxyribonucleotides from the corresponding ribonucleotides. In Encephalitozoon cuniculi (strain GB-M1) (Microsporidian parasite), this protein is Ribonucleoside-diphosphate reductase large chain.